Reading from the N-terminus, the 73-residue chain is Ocellatin-PT6 (73 aa).

Positions 1 to 22 are cleaved as a signal peptide; it reads MAFLKKSLFLVLFLGLVSLSIC. Positions 23–39 are excised as a propeptide; the sequence is DEEKRQDEDDDDDDDEE.

In terms of tissue distribution, expressed by the skin glands.

It is found in the secreted. Its function is as follows. Has antibacterial activity against Gram-negative bacterium E.coli ATCC 25922 (MIC=120 uM) but not against S.pneumoniae ATCC 700603, S.choleraesuis ATCC 14028 or against Gram-positive bacterium S.aureus ATCC 29313. Shows no hemolytic activity and no cytotoxicity. This is Ocellatin-PT6 from Leptodactylus pustulatus (Ceara white-lipped frog).